The primary structure comprises 1019 residues: Outer capsid protein P3 (1019 aa).

The protein belongs to the phytoreovirus inner capsid protein P3 family. In terms of assembly, homodimer. Homomultimer.

It is found in the virion. It localises to the host cytoplasm. Functionally, capsid protein which self-assembles to form the inner icosahedral capsid with a T=2 symmetry, and consisting of 60 P3 dimers. This Rice dwarf virus (isolate Fujian) (RDV) protein is Outer capsid protein P3.